Consider the following 155-residue polypeptide: Gene 27 protein (155 aa).

The segment at 41–114 is disordered; sequence KAKTQGMNVP…KAPENPNLPN (74 aa). Composition is skewed to basic and acidic residues over residues 55–68 and 78–95; these read KKPEDVAPAKEKPT and TAKEEKKETAPKAKETKA.

Required for late gene transcription and DNA replication. The protein is Gene 27 protein (27) of Bacillus subtilis (Bacteriophage SP01).